Consider the following 149-residue polypeptide: 1,4-dihydroxy-2-naphthoyl-CoA hydrolase (149 aa).

D19 is a catalytic residue.

It belongs to the 4-hydroxybenzoyl-CoA thioesterase family. DHNA-CoA hydrolase subfamily.

The catalysed reaction is 1,4-dihydroxy-2-naphthoyl-CoA + H2O = 1,4-dihydroxy-2-naphthoate + CoA + H(+). Its pathway is cofactor biosynthesis; phylloquinone biosynthesis. It participates in quinol/quinone metabolism; 1,4-dihydroxy-2-naphthoate biosynthesis; 1,4-dihydroxy-2-naphthoate from chorismate: step 7/7. Catalyzes the hydrolysis of 1,4-dihydroxy-2-naphthoyl-CoA (DHNA-CoA) to 1,4-dihydroxy-2-naphthoate (DHNA), a reaction involved in phylloquinone (vitamin K1) biosynthesis. The chain is 1,4-dihydroxy-2-naphthoyl-CoA hydrolase from Synechococcus sp. (strain CC9605).